Reading from the N-terminus, the 1254-residue chain is Structural polyprotein (1254 aa).

Residues 1 to 33 (MFPFQPMYPMQPMPYRNPFAAPRRPWFPRTDPF) are necessary for nucleocapsid assembly and virus assembly. The tract at residues 33 to 68 (FLAMQVQELTRSMANLTFKQRRDAPPEGPSAKKPKK) is host transcription inhibition. The Supraphysiological nuclear export signal motif lies at 41-48 (LTRSMANL). The segment at 45–119 (MANLTFKQRR…KKPGKRQRMV (75 aa)) is disordered. The Nuclear localization signal signature appears at 64–68 (KKPKK). The segment covering 80-92 (GKKKKNQGKKKAK) has biased composition (basic residues). Positions 91-127 (AKTGPPNPKAQNGNKKKTNKKPGKRQRMVMKLESDKT) are binding to the viral RNA. Thr93 and Thr108 each carry phosphothreonine. Residues 104 to 118 (NKKKTNKKPGKRQRM) are compositionally biased toward basic residues. Residues 112 to 126 (PGKRQRMVMKLESDK) are ribosome-binding. A Phosphoserine modification is found at Ser124. The 150-residue stretch at 126 to 275 (KTFPIMLEGK…KYTPENCEQW (150 aa)) folds into the Peptidase S3 domain. At Thr127 the chain carries Phosphothreonine. Residues His152, Asp174, and Ser226 each act as charge relay system in the active site. Residues 276–287 (SLVTTMCLLANV) form a functions as an uncleaved signal peptide for the precursor of protein E3/E2 region. Topologically, residues 276–701 (SLVTTMCLLA…HYYHRYPMST (426 aa)) are extracellular. N-linked (GlcNAc...) asparagine; by host glycans are attached at residues Asn286, Asn546, and Asn652. The chain crosses the membrane as a helical span at residues 702–722 (ILGLSICAAIATVSVAASTWL). Residues 723–757 (FCRSRVACLTPYRLTPNARIPFCLAVLCCARTARA) lie on the Cytoplasmic side of the membrane. Residues Cys730, Cys750, and Cys751 are each lipidated (S-palmitoyl cysteine; by host). The segment at 730–750 (CLTPYRLTPNARIPFCLAVLC) is transient transmembrane before p62-6K protein processing. Topologically, residues 758–772 (ETTWESLDHLWNNNQ) are extracellular. The helical transmembrane segment at 773–793 (QMFWIQLLIPLAALIVVTRLL) threads the bilayer. The Cytoplasmic segment spans residues 794-795 (RC). A helical transmembrane segment spans residues 796–816 (VCCVVPFLVMAGAAAGAYEHA). The Extracellular portion of the chain corresponds to 817 to 1224 (TTMPSQAGIS…SKTAWTWLTS (408 aa)). 4 disulfide bridges follow: Cys861–Cys926, Cys874–Cys906, Cys875–Cys908, and Cys880–Cys890. The tract at residues 896–913 (VYPFMWGGAYCFCDTENT) is E1 fusion peptide loop. An N-linked (GlcNAc...) asparagine; by host glycan is attached at Asn946. 4 cysteine pairs are disulfide-bonded: Cys1071–Cys1083, Cys1113–Cys1188, Cys1118–Cys1192, and Cys1140–Cys1182. The chain crosses the membrane as a helical span at residues 1225-1245 (LLGGSAVIIIIGLVLATIVAM). Over 1246-1254 (YVLTNQKHN) the chain is Cytoplasmic.

Homodimer. Homomultimer. Interacts with host karyopherin KPNA4; this interaction allows the nuclear import of the viral capsid protein. Interacts with spike glycoprotein E2. Interacts with host IRAK1; the interaction leads to inhibition of IRAK1-dependent signaling. Part of a tetrameric complex composed of host CRM1, host importin alpha/beta dimer and the viral capsid; this complex blocks the receptor-mediated transport through the nuclear pore. Interacts with host phosphatase PPP1CA; this interaction dephosphorylates the capsid protein, which increases its ability to bind to the viral genome. As to quaternary structure, the precursor of protein E3/E2 and E1 form a heterodimer shortly after synthesis. In terms of assembly, interacts with spike glycoprotein E2. The precursor of protein E3/E2 and E1 form a heterodimer shortly after synthesis. Processing of the precursor of protein E3/E2 into E2 and E3 results in a heterodimer of the spike glycoproteins E2 and E1. Spike at virion surface are constituted of three E2-E1 heterodimers. After target cell attachment and endocytosis, E1 change conformation to form homotrimers. Interacts with 6K protein. Interacts with host LDLRAD3; this interaction mediates viral entry to the host cell. Interacts with spike glycoprotein E1. Processing of the precursor of protein E3/E2 into E2 and E3 results in a heterodimer of the spike glycoproteins E2 and E1. Spike at virion surface are constituted of a trimer of E2-E1 heterodimers. Interacts with 6K protein. Interacts with host LDLRAD3; this interaction mediates viral entry to the host cell. As to quaternary structure, oligomer. Interacts with spike glycoprotein E1. Interacts with spike glycoprotein E2. In terms of processing, structural polyprotein: Specific enzymatic cleavages in vivo yield mature proteins. Capsid protein is auto-cleaved during polyprotein translation, unmasking a signal peptide at the N-terminus of the precursor of E3/E2. The remaining polyprotein is then targeted to the host endoplasmic reticulum, where host signal peptidase cleaves it into pE2, 6K and E1 proteins. pE2 is further processed to mature E3 and E2 by host furin in trans-Golgi vesicle. Palmitoylated via thioester bonds. These palmitoylations may induce disruption of the C-terminus transmembrane. This would result in the reorientation of E2 C-terminus from lumenal to cytoplasmic side. Post-translationally, phosphorylated on serine and threonine residues. In terms of processing, N-glycosylated. Palmitoylated via thioester bonds.

Its subcellular location is the virion. The protein resides in the host cytoplasm. The protein localises to the host cell membrane. It localises to the host nucleus. It is found in the virion membrane. It catalyses the reaction Autocatalytic release of the core protein from the N-terminus of the togavirus structural polyprotein by hydrolysis of a -Trp-|-Ser- bond.. Its function is as follows. Forms an icosahedral capsid with a T=4 symmetry composed of 240 copies of the capsid protein surrounded by a lipid membrane through which penetrate 80 spikes composed of trimers of E1-E2 heterodimers. The capsid protein binds to the viral RNA genome at a site adjacent to a ribosome binding site for viral genome translation following genome release. Possesses a protease activity that results in its autocatalytic cleavage from the nascent structural protein. Following its self-cleavage, the capsid protein transiently associates with ribosomes, and within several minutes the protein binds to viral RNA and rapidly assembles into icosahedric core particles. The resulting nucleocapsid eventually associates with the cytoplasmic domain of the spike glycoprotein E2 at the cell membrane, leading to budding and formation of mature virions. In case of infection, new virions attach to target cells and after clathrin-mediated endocytosis their membrane fuses with the host endosomal membrane. This leads to the release of the nucleocapsid into the cytoplasm, followed by an uncoating event necessary for the genomic RNA to become accessible. The uncoating might be triggered by the interaction of capsid proteins with ribosomes. Binding of ribosomes would release the genomic RNA since the same region is genomic RNA-binding and ribosome-binding. Specifically inhibits interleukin-1 receptor-associated kinase 1/IRAK1-dependent signaling during viral entry, representing a means by which the alphaviruses may evade innate immune detection and activation prior to viral gene expression. Inhibits host transcription. Forms a tetrameric complex with XPO1/CRM1 and the nuclear import receptor importin. This complex blocks the central channel of host nuclear pores thereby inhibiting the receptor-mediated nuclear transport and thus the host mRNA and rRNA transcription. The inhibition of transcription is linked to a cytopathic effect on the host cell. Provides the signal sequence for the translocation of the precursor of protein E3/E2 to the host endoplasmic reticulum. Furin-cleaved E3 remains associated with spike glycoprotein E1 and mediates pH protection of the latter during the transport via the secretory pathway. After virion release from the host cell, the assembly protein E3 is gradually released in the extracellular space. In terms of biological role, plays a role in viral attachment to target host cell, by binding to the cell receptor LDLRAD3. Synthesized as a p62 precursor which is processed by furin at the cell membrane just before virion budding, giving rise to E2-E1 heterodimer. The p62-E1 heterodimer is stable, whereas E2-E1 is unstable and dissociate at low pH. p62 is processed at the last step, presumably to avoid E1 fusion activation before its final export to cell surface. E2 C-terminus contains a transitory transmembrane that would be disrupted by palmitoylation, resulting in reorientation of the C-terminal tail from lumenal to cytoplasmic side. This step is critical since E2 C-terminus is involved in budding by interacting with capsid proteins. This release of E2 C-terminus in cytoplasm occurs lately in protein export, and precludes premature assembly of particles at the endoplasmic reticulum membrane. Functionally, acts as a viroporin that participates in virus glycoprotein processing and transport to the plasma membrane, cell permeabilization and budding of viral particles. Disrupts the calcium homeostasis of the cell, probably at the endoplasmic reticulum level. This leads to cytoplasmic calcium elevation. Because of its lipophilic properties, the 6K protein is postulated to influence the selection of lipids that interact with the transmembrane domains of the glycoproteins, which, in turn, affects the deformability of the bilayer required for the extreme curvature that occurs as budding proceeds. Present in low amount in virions, about 3% compared to viral glycoproteins. Its function is as follows. Class II viral fusion protein. Fusion activity is inactive as long as E1 is bound to E2 in mature virion. After virus attachment to cell receptor LDLRAD3 and endocytosis, acidification of the endosome would induce dissociation of E1/E2 heterodimer and concomitant trimerization of the E1 subunits. This E1 trimer is fusion active, and promotes release of viral nucleocapsid in cytoplasm after endosome and viral membrane fusion. Efficient fusion requires the presence of cholesterol and sphingolipid in the target membrane. Fusion is optimal at levels of about 1 molecule of cholesterol per 2 molecules of phospholipids, and is specific for sterols containing a 3-beta-hydroxyl group. The sequence is that of Structural polyprotein from Bos taurus (Bovine).